Reading from the N-terminus, the 219-residue chain is Uracil-DNA glycosylase (219 aa).

Residue Asp61 is the Proton acceptor of the active site.

It belongs to the uracil-DNA glycosylase (UDG) superfamily. UNG family.

The protein localises to the cytoplasm. It catalyses the reaction Hydrolyzes single-stranded DNA or mismatched double-stranded DNA and polynucleotides, releasing free uracil.. Its function is as follows. Excises uracil residues from the DNA which can arise as a result of misincorporation of dUMP residues by DNA polymerase or due to deamination of cytosine. The polypeptide is Uracil-DNA glycosylase (Exiguobacterium sibiricum (strain DSM 17290 / CCUG 55495 / CIP 109462 / JCM 13490 / 255-15)).